The primary structure comprises 272 residues: Alcohol dehydrogenase-related 31 kDa protein (272 aa).

11–34 (YVADCGGIALETSKVLMTKNIAKL) is a binding site for NAD(+). Serine 139 provides a ligand contact to substrate. Tyrosine 152 (proton acceptor) is an active-site residue.

The protein belongs to the short-chain dehydrogenases/reductases (SDR) family.

The sequence is that of Alcohol dehydrogenase-related 31 kDa protein (Adhr) from Drosophila teissieri (Fruit fly).